The primary structure comprises 371 residues: Chaperone protein DnaJ (371 aa).

The region spanning 4-68 (DYYKILGVSK…QKRAAYDRFG (65 aa)) is the J domain. A CR-type zinc finger spans residues 134 to 212 (GIEKNISFSS…CHGMGRCHKQ (79 aa)). C147, C150, C164, C167, C186, C189, C200, and C203 together coordinate Zn(2+). 4 CXXCXGXG motif repeats span residues 147-154 (CDTCHGSG), 164-171 (CDACGGVG), 186-193 (CHKCKGNG), and 200-207 (CKKCHGMG).

This sequence belongs to the DnaJ family. As to quaternary structure, homodimer. It depends on Zn(2+) as a cofactor.

The protein resides in the cytoplasm. Its function is as follows. Participates actively in the response to hyperosmotic and heat shock by preventing the aggregation of stress-denatured proteins and by disaggregating proteins, also in an autonomous, DnaK-independent fashion. Unfolded proteins bind initially to DnaJ; upon interaction with the DnaJ-bound protein, DnaK hydrolyzes its bound ATP, resulting in the formation of a stable complex. GrpE releases ADP from DnaK; ATP binding to DnaK triggers the release of the substrate protein, thus completing the reaction cycle. Several rounds of ATP-dependent interactions between DnaJ, DnaK and GrpE are required for fully efficient folding. Also involved, together with DnaK and GrpE, in the DNA replication of plasmids through activation of initiation proteins. This Rickettsia akari (strain Hartford) protein is Chaperone protein DnaJ.